We begin with the raw amino-acid sequence, 888 residues long: Extra-large guanine nucleotide-binding protein 1 (888 aa).

The segment at 98-119 (SVIEHTEEEEEEEGGDGEDCEL) is disordered. A compositionally biased stretch (acidic residues) spans 103–118 (TEEEEEEEGGDGEDCE). A Nuclear localization signal motif is present at residues 205-222 (RRVRVVPVKKQPQTKGKK). An RING-type; degenerate zinc finger spans residues 225-268 (CYRCFKGSRFTEKEVCLVCDAKYCNSCVLRAMGSMPEGRKCVTC). Positions 482 to 879 (TLQKILLVGN…NICMSEYSMY (398 aa)) constitute a G-alpha domain. Positions 485–498 (KILLVGNSGSGTST) are G1 motif. Residues 490–498 (GNSGSGTST) and 661–669 (DILYAEGVT) each bind GTP. Ser497 and Thr669 together coordinate Ca(2+). The interval 661–669 (DILYAEGVT) is G2 motif. Residues 702-711 (YQLIRVPSRG) are G3 motif. A G4 motif region spans residues 770-777 (LLILNKYD). Residue 774–777 (NKYD) coordinates GTP. The G5 motif stretch occupies residues 843 to 848 (SKSLDP).

It belongs to the G-alpha family. XLG subfamily. It depends on Ca(2+) as a cofactor. Ubiquitous. Strongly expressed in vascular tissues, root and shoot meristems and lateral root primordia.

The protein localises to the nucleus. In terms of biological role, guanine nucleotide-binding proteins (G proteins) are involved as modulators or transducers in various transmembrane signaling systems. Binds GTP with specificity. Plays a role in the root morphogenesis by regulation of the cell proliferation. The protein is Extra-large guanine nucleotide-binding protein 1 (XLG1) of Arabidopsis thaliana (Mouse-ear cress).